A 519-amino-acid chain; its full sequence is Cytochrome P450 monooxygenase easM (519 aa).

Residues 16 to 33 (VAPALFASSISVLFLILS) form a helical membrane-spanning segment. N-linked (GlcNAc...) asparagine glycosylation is found at N50 and N353. C458 is a binding site for heme.

This sequence belongs to the cytochrome P450 family. The cofactor is heme.

It is found in the membrane. The protein operates within alkaloid biosynthesis; ergot alkaloid biosynthesis. Functionally, cytochrome P450 monooxygenase; part of the gene cluster that mediates the biosynthesis of fumiclavanine C, a fungal ergot alkaloid. DmaW catalyzes the first step of ergot alkaloid biosynthesis by condensing dimethylallyl diphosphate (DMAP) and tryptophan to form 4-dimethylallyl-L-tryptophan. The second step is catalyzed by the methyltransferase easF that methylates 4-dimethylallyl-L-tryptophan in the presence of S-adenosyl-L-methionine, resulting in the formation of 4-dimethylallyl-L-abrine. The catalase easC and the FAD-dependent oxidoreductase easE then transform 4-dimethylallyl-L-abrine to chanoclavine-I which is further oxidized by EasD in the presence of NAD(+), resulting in the formation of chanoclavine-I aldehyde. EasA reduces chanoclavine-I aldehyde to dihydrochanoclavine-I aldehyde that spontaneously dehydrates to form 6,8-dimethyl-6,7-didehydroergoline. EasG then catalyzes the reduction of 6,8-dimethyl-6,7-didehydroergoline to form festuclavine. Hydrolysis of festuclavine by easM then leads to the formation of fumigaclavine B which is in turn acetylated by easN to fumigaclavine A. Finally, easL catalyzes the conversion of fumigaclavine A into fumigaclavine C by attaching a dimethylallyl moiety to C-2 of the indole nucleus. The polypeptide is Cytochrome P450 monooxygenase easM (Aspergillus fumigatus (strain ATCC MYA-4609 / CBS 101355 / FGSC A1100 / Af293) (Neosartorya fumigata)).